The sequence spans 190 residues: Threonylcarbamoyl-AMP synthase (190 aa).

Positions leucine 7–glycine 190 constitute a YrdC-like domain.

It belongs to the SUA5 family. TsaC subfamily.

Its subcellular location is the cytoplasm. It catalyses the reaction L-threonine + hydrogencarbonate + ATP = L-threonylcarbamoyladenylate + diphosphate + H2O. Its function is as follows. Required for the formation of a threonylcarbamoyl group on adenosine at position 37 (t(6)A37) in tRNAs that read codons beginning with adenine. Catalyzes the conversion of L-threonine, HCO(3)(-)/CO(2) and ATP to give threonylcarbamoyl-AMP (TC-AMP) as the acyladenylate intermediate, with the release of diphosphate. This is Threonylcarbamoyl-AMP synthase from Enterobacter sp. (strain 638).